A 494-amino-acid chain; its full sequence is Alpha-amylase B (494 aa).

Positions 1 to 18 (MFLAKSIVCLALLAVANA) are cleaved as a signal peptide. Glutamine 19 carries the post-translational modification Pyrrolidone carboxylic acid. A disulfide bridge links cysteine 46 with cysteine 102. Ca(2+) is bound by residues asparagine 116, arginine 165, and aspartate 174. Cysteine 153 and cysteine 167 are oxidised to a cystine. Chloride is bound at residue arginine 202. The active-site Nucleophile is aspartate 204. Histidine 208 contacts Ca(2+). The active-site Proton donor is the glutamate 241. Positions 304 and 343 each coordinate chloride. Intrachain disulfides connect cysteine 376/cysteine 382 and cysteine 448/cysteine 460.

It belongs to the glycosyl hydrolase 13 family. Monomer. It depends on Ca(2+) as a cofactor. The cofactor is chloride.

The enzyme catalyses Endohydrolysis of (1-&gt;4)-alpha-D-glucosidic linkages in polysaccharides containing three or more (1-&gt;4)-alpha-linked D-glucose units.. This chain is Alpha-amylase B (Amy-d), found in Drosophila melanogaster (Fruit fly).